The chain runs to 210 residues: MNDSALDIITAHARDGARLRETFFAEQATMLRETALRIAACLARGGKILLCGNGGSAADAQHLAAEFVNRFLVDRPALPALALTTDTSALTAIANDMDFSQVFSRQVEALGRKGDILVGISTSGNSPNVLAALEAARRIGMLTLGFTGRGGGRMAALCHMLVDVANPSTPLIQEIHITAGHLLCQLTDYYLFENVAALAPYLHADTVNED.

The region spanning I38–L202 is the SIS domain. Position 53–55 (N53–G55) interacts with substrate. Residues H62 and E66 each coordinate Zn(2+). Residues E66, N95–D96, S121–S123, S126, and Q173 each bind substrate. Zn(2+) is bound by residues Q173 and H181.

Belongs to the SIS family. GmhA subfamily. Homotetramer. Zn(2+) serves as cofactor.

Its subcellular location is the cytoplasm. It carries out the reaction 2 D-sedoheptulose 7-phosphate = D-glycero-alpha-D-manno-heptose 7-phosphate + D-glycero-beta-D-manno-heptose 7-phosphate. The protein operates within carbohydrate biosynthesis; D-glycero-D-manno-heptose 7-phosphate biosynthesis; D-glycero-alpha-D-manno-heptose 7-phosphate and D-glycero-beta-D-manno-heptose 7-phosphate from sedoheptulose 7-phosphate: step 1/1. Functionally, catalyzes the isomerization of sedoheptulose 7-phosphate in D-glycero-D-manno-heptose 7-phosphate. The chain is Phosphoheptose isomerase from Desulfovibrio desulfuricans (strain ATCC 27774 / DSM 6949 / MB).